Here is a 70-residue protein sequence, read N- to C-terminus: Small ribosomal subunit protein bS21 (70 aa).

It belongs to the bacterial ribosomal protein bS21 family.

This is Small ribosomal subunit protein bS21 from Cupriavidus pinatubonensis (strain JMP 134 / LMG 1197) (Cupriavidus necator (strain JMP 134)).